We begin with the raw amino-acid sequence, 787 residues long: Protocadherin beta-15 (787 aa).

The N-terminal stretch at 1 to 26 (MEPAGERFPEQRQVLILLLLLEVTLA) is a signal peptide. Over 27-690 (GWEPRRYSVM…AQADSLTVYL (664 aa)) the chain is Extracellular. 5 Cadherin domains span residues 35-133 (VMEE…SPEF), 138-242 (MTLK…APEF), 247-347 (YEVQ…FPEL), 352-451 (LTSP…APAF), and 456-561 (YTLF…SPFV). Residue asparagine 418 is glycosylated (N-linked (GlcNAc...) asparagine). Asparagine 567 carries N-linked (GlcNAc...) asparagine glycosylation. One can recognise a Cadherin 6 domain in the interval 568–671 (GSAPCTELVP…LVDGFSQPYL (104 aa)). A helical membrane pass occupies residues 691 to 711 (VVALASVSSLFLFSVFLFVAV). Topologically, residues 712–787 (RLCRRSRAAS…DSRRKSEFLE (76 aa)) are cytoplasmic.

The protein resides in the cell membrane. Functionally, potential calcium-dependent cell-adhesion protein. May be involved in the establishment and maintenance of specific neuronal connections in the brain. This is Protocadherin beta-15 (PCDHB15) from Homo sapiens (Human).